We begin with the raw amino-acid sequence, 278 residues long: Dermonecrotic toxin Ls4SicTox-alphaIII1ii (278 aa).

Residue H5 is part of the active site. E25 and D27 together coordinate Mg(2+). Catalysis depends on H40, which acts as the Nucleophile. C44 and C50 are disulfide-bonded. D84 contacts Mg(2+).

It belongs to the arthropod phospholipase D family. Class I subfamily. Requires Mg(2+) as cofactor. In terms of tissue distribution, expressed by the venom gland.

Its subcellular location is the secreted. The catalysed reaction is an N-(acyl)-sphingosylphosphocholine = an N-(acyl)-sphingosyl-1,3-cyclic phosphate + choline. The enzyme catalyses an N-(acyl)-sphingosylphosphoethanolamine = an N-(acyl)-sphingosyl-1,3-cyclic phosphate + ethanolamine. It catalyses the reaction a 1-acyl-sn-glycero-3-phosphocholine = a 1-acyl-sn-glycero-2,3-cyclic phosphate + choline. It carries out the reaction a 1-acyl-sn-glycero-3-phosphoethanolamine = a 1-acyl-sn-glycero-2,3-cyclic phosphate + ethanolamine. Functionally, dermonecrotic toxins cleave the phosphodiester linkage between the phosphate and headgroup of certain phospholipids (sphingolipid and lysolipid substrates), forming an alcohol (often choline) and a cyclic phosphate. This toxin acts on sphingomyelin (SM). It may also act on ceramide phosphoethanolamine (CPE), lysophosphatidylcholine (LPC) and lysophosphatidylethanolamine (LPE), but not on lysophosphatidylserine (LPS), and lysophosphatidylglycerol (LPG). It acts by transphosphatidylation, releasing exclusively cyclic phosphate products as second products. Induces dermonecrosis, hemolysis, increased vascular permeability, edema, inflammatory response, and platelet aggregation. This Loxosceles sp. (strain 4 GJB-2008) (Recluse spider) protein is Dermonecrotic toxin Ls4SicTox-alphaIII1ii.